We begin with the raw amino-acid sequence, 940 residues long: Isoleucine--tRNA ligase (940 aa).

A 'HIGH' region motif is present at residues Pro-58–His-68. Residue Glu-564 coordinates L-isoleucyl-5'-AMP. Residues Lys-605–Ser-609 carry the 'KMSKS' region motif. Position 608 (Lys-608) interacts with ATP. Positions 903, 906, 923, and 926 each coordinate Zn(2+).

This sequence belongs to the class-I aminoacyl-tRNA synthetase family. IleS type 1 subfamily. In terms of assembly, monomer. It depends on Zn(2+) as a cofactor.

The protein localises to the cytoplasm. The enzyme catalyses tRNA(Ile) + L-isoleucine + ATP = L-isoleucyl-tRNA(Ile) + AMP + diphosphate. Catalyzes the attachment of isoleucine to tRNA(Ile). As IleRS can inadvertently accommodate and process structurally similar amino acids such as valine, to avoid such errors it has two additional distinct tRNA(Ile)-dependent editing activities. One activity is designated as 'pretransfer' editing and involves the hydrolysis of activated Val-AMP. The other activity is designated 'posttransfer' editing and involves deacylation of mischarged Val-tRNA(Ile). The protein is Isoleucine--tRNA ligase of Shewanella baltica (strain OS223).